The sequence spans 520 residues: Ribonuclease Y (520 aa).

At 1–3 (MTP) the chain is on the extracellular side. A helical membrane pass occupies residues 4-24 (IMMVLISILLILLGLVVGYFV). Residues 25-520 (RKTIAEAKIA…RETRAVEYAK (496 aa)) are Cytoplasmic-facing. Positions 29 to 141 (AEAKIAGARG…KVDEMIRMQQ (113 aa)) form a coiled coil. A KH domain is found at 210–273 (TVSVVNLPND…ETARIALDKL (64 aa)). The 94-residue stretch at 336–429 (VLKHSMEVAF…VAAADALSAA (94 aa)) folds into the HD domain.

Belongs to the RNase Y family. In terms of assembly, homodimer. Component of a possible RNA degradosome complex composed of rny, rnjA, rnjB, pnp, pfkA and eno (although rnjA and rnjB's presence is unclear). Interacts with RNA helicase CshA which may also be a member of the RNA degradosome complex. Interacts with full-length dynamin-like protein DynA. It depends on Mg(2+) as a cofactor. Mn(2+) serves as cofactor. Requires Zn(2+) as cofactor.

It is found in the cell membrane. Shows preference for transcripts carrying a monophosphate group at the 5' end. In terms of biological role, endoribonuclease that initiates mRNA decay. Initiates the decay of all SAM-dependent riboswitches, such as yitJ riboswitch. Involved in processing of the gapA operon mRNA, it cleaves between cggR and gapA. Is also the decay-initiating endonuclease for rpsO mRNA. Involved in degradation of type I toxin-antitoxin system bsrG/SR4 RNAs and a minor role in degradation of type I toxin-antitoxin system bsrE/SR5 degradation. This Bacillus subtilis (strain 168) protein is Ribonuclease Y (rny).